We begin with the raw amino-acid sequence, 155 residues long: SsrA-binding protein (155 aa).

Belongs to the SmpB family.

The protein resides in the cytoplasm. In terms of biological role, required for rescue of stalled ribosomes mediated by trans-translation. Binds to transfer-messenger RNA (tmRNA), required for stable association of tmRNA with ribosomes. tmRNA and SmpB together mimic tRNA shape, replacing the anticodon stem-loop with SmpB. tmRNA is encoded by the ssrA gene; the 2 termini fold to resemble tRNA(Ala) and it encodes a 'tag peptide', a short internal open reading frame. During trans-translation Ala-aminoacylated tmRNA acts like a tRNA, entering the A-site of stalled ribosomes, displacing the stalled mRNA. The ribosome then switches to translate the ORF on the tmRNA; the nascent peptide is terminated with the 'tag peptide' encoded by the tmRNA and targeted for degradation. The ribosome is freed to recommence translation, which seems to be the essential function of trans-translation. In Halothermothrix orenii (strain H 168 / OCM 544 / DSM 9562), this protein is SsrA-binding protein.